Here is a 465-residue protein sequence, read N- to C-terminus: Chromosomal replication initiator protein DnaA (465 aa).

The interval 1–85 (MSGFWESCLQ…IALVIGSGKA (85 aa)) is domain I, interacts with DnaA modulators. The interval 85 to 129 (ATAARIQATTTDSGQNAPANPATTSEKRTAASEKARGKGSNYEKS) is domain II. A compositionally biased stretch (polar residues) spans 93-108 (TTTDSGQNAPANPATT). A disordered region spans residues 93–125 (TTTDSGQNAPANPATTSEKRTAASEKARGKGSN). Residues 109–125 (SEKRTAASEKARGKGSN) are compositionally biased toward basic and acidic residues. A domain III, AAA+ region region spans residues 130–346 (RLFPSFTFDN…GALKKVLAYS (217 aa)). 4 residues coordinate ATP: glycine 174, glycine 176, lysine 177, and threonine 178. A domain IV, binds dsDNA region spans residues 347–465 (SFHGRVIALD…LHVLLQVLKG (119 aa)).

The protein belongs to the DnaA family. Oligomerizes as a right-handed, spiral filament on DNA at oriC.

It localises to the cytoplasm. Its function is as follows. Plays an essential role in the initiation and regulation of chromosomal replication. ATP-DnaA binds to the origin of replication (oriC) to initiate formation of the DNA replication initiation complex once per cell cycle. Binds the DnaA box (a 9 base pair repeat at the origin) and separates the double-stranded (ds)DNA. Forms a right-handed helical filament on oriC DNA; dsDNA binds to the exterior of the filament while single-stranded (ss)DNA is stabiized in the filament's interior. The ATP-DnaA-oriC complex binds and stabilizes one strand of the AT-rich DNA unwinding element (DUE), permitting loading of DNA polymerase. After initiation quickly degrades to an ADP-DnaA complex that is not apt for DNA replication. Binds acidic phospholipids. This chain is Chromosomal replication initiator protein DnaA, found in Dechloromonas aromatica (strain RCB).